Consider the following 304-residue polypeptide: uncharacterized protein (304 aa).

The segment covering 226–244 (SRNSESSRQSNLNSPNDSV) has biased composition (polar residues). Residues 226–263 (SRNSESSRQSNLNSPNDSVKFNEFNKSNKSTKTNPNNI) form a disordered region. The segment covering 246-262 (FNEFNKSNKSTKTNPNN) has biased composition (low complexity).

This is an uncharacterized protein from Acanthamoeba polyphaga (Amoeba).